Here is a 124-residue protein sequence, read N- to C-terminus: uncharacterized protein (124 aa).

It localises to the plastid. Its subcellular location is the chloroplast. This is an uncharacterized protein from Chlamydomonas reinhardtii (Chlamydomonas smithii).